The primary structure comprises 69 residues: Cytochrome c oxidase subunit 8A, mitochondrial (69 aa).

The transit peptide at 1-25 (MSVLTPLLLRSLTGSARRLMVPRAQ) directs the protein to the mitochondrion. The SIFI-degron signature appears at 2–19 (SVLTPLLLRSLTGSARRL). Residues 26 to 36 (VHSKPAREQLG) are Mitochondrial matrix-facing. Residues 37–60 (VLDITIGLTSCFVCCLLPAGWVLS) form a helical membrane-spanning segment. The Mitochondrial intermembrane segment spans residues 61–69 (HLESYKKRE).

Belongs to the cytochrome c oxidase VIII family. In terms of assembly, component of the cytochrome c oxidase (complex IV, CIV), a multisubunit enzyme composed of 14 subunits. The complex is composed of a catalytic core of 3 subunits MT-CO1, MT-CO2 and MT-CO3, encoded in the mitochondrial DNA, and 11 supernumerary subunits COX4I, COX5A, COX5B, COX6A, COX6B, COX6C, COX7A, COX7B, COX7C, COX8 and NDUFA4, which are encoded in the nuclear genome. The complex exists as a monomer or a dimer and forms supercomplexes (SCs) in the inner mitochondrial membrane with NADH-ubiquinone oxidoreductase (complex I, CI) and ubiquinol-cytochrome c oxidoreductase (cytochrome b-c1 complex, complex III, CIII), resulting in different assemblies (supercomplex SCI(1)III(2)IV(1) and megacomplex MCI(2)III(2)IV(2)). In response to mitochondrial stress, the precursor protein is ubiquitinated by the SIFI complex in the cytoplasm before mitochondrial import, leading to its degradation. Within the SIFI complex, UBR4 initiates ubiquitin chain that are further elongated or branched by KCMF1.

It is found in the mitochondrion inner membrane. Its pathway is energy metabolism; oxidative phosphorylation. Component of the cytochrome c oxidase, the last enzyme in the mitochondrial electron transport chain which drives oxidative phosphorylation. The respiratory chain contains 3 multisubunit complexes succinate dehydrogenase (complex II, CII), ubiquinol-cytochrome c oxidoreductase (cytochrome b-c1 complex, complex III, CIII) and cytochrome c oxidase (complex IV, CIV), that cooperate to transfer electrons derived from NADH and succinate to molecular oxygen, creating an electrochemical gradient over the inner membrane that drives transmembrane transport and the ATP synthase. Cytochrome c oxidase is the component of the respiratory chain that catalyzes the reduction of oxygen to water. Electrons originating from reduced cytochrome c in the intermembrane space (IMS) are transferred via the dinuclear copper A center (CU(A)) of subunit 2 and heme A of subunit 1 to the active site in subunit 1, a binuclear center (BNC) formed by heme A3 and copper B (CU(B)). The BNC reduces molecular oxygen to 2 water molecules using 4 electrons from cytochrome c in the IMS and 4 protons from the mitochondrial matrix. In Mus musculus (Mouse), this protein is Cytochrome c oxidase subunit 8A, mitochondrial (Cox8a).